Reading from the N-terminus, the 550-residue chain is Glucose-6-phosphate isomerase (550 aa).

Glu-356 acts as the Proton donor in catalysis. Active-site residues include His-387 and Lys-515.

Belongs to the GPI family.

It localises to the cytoplasm. The enzyme catalyses alpha-D-glucose 6-phosphate = beta-D-fructose 6-phosphate. The protein operates within carbohydrate biosynthesis; gluconeogenesis. It functions in the pathway carbohydrate degradation; glycolysis; D-glyceraldehyde 3-phosphate and glycerone phosphate from D-glucose: step 2/4. In terms of biological role, catalyzes the reversible isomerization of glucose-6-phosphate to fructose-6-phosphate. This Vibrio vulnificus (strain YJ016) protein is Glucose-6-phosphate isomerase.